The chain runs to 459 residues: Putrescine aminotransferase (459 aa).

Residues 150 to 151 (GT) and Gln274 contribute to the pyridoxal 5'-phosphate site. Position 300 is an N6-(pyridoxal phosphate)lysine (Lys300). Thr332 lines the pyridoxal 5'-phosphate pocket.

It belongs to the class-III pyridoxal-phosphate-dependent aminotransferase family. Putrescine aminotransferase subfamily. The cofactor is pyridoxal 5'-phosphate.

It carries out the reaction an alkane-alpha,omega-diamine + 2-oxoglutarate = an omega-aminoaldehyde + L-glutamate. The enzyme catalyses putrescine + 2-oxoglutarate = 1-pyrroline + L-glutamate + H2O. It catalyses the reaction cadaverine + 2-oxoglutarate = 5-aminopentanal + L-glutamate. Its pathway is amine and polyamine degradation; putrescine degradation; 4-aminobutanal from putrescine (transaminase route): step 1/1. In terms of biological role, catalyzes the aminotransferase reaction from putrescine to 2-oxoglutarate, leading to glutamate and 4-aminobutanal, which spontaneously cyclizes to form 1-pyrroline. This is the first step in one of two pathways for putrescine degradation, where putrescine is converted into 4-aminobutanoate (gamma-aminobutyrate or GABA) via 4-aminobutanal. Also functions as a cadaverine transaminase in a a L-lysine degradation pathway to succinate that proceeds via cadaverine, glutarate and L-2-hydroxyglutarate. The chain is Putrescine aminotransferase from Salmonella agona (strain SL483).